Reading from the N-terminus, the 261-residue chain is 5-oxoprolinase subunit A (261 aa).

Belongs to the LamB/PxpA family. As to quaternary structure, forms a complex composed of PxpA, PxpB and PxpC.

The catalysed reaction is 5-oxo-L-proline + ATP + 2 H2O = L-glutamate + ADP + phosphate + H(+). Catalyzes the cleavage of 5-oxoproline to form L-glutamate coupled to the hydrolysis of ATP to ADP and inorganic phosphate. This Coprothermobacter proteolyticus (strain ATCC 35245 / DSM 5265 / OCM 4 / BT) protein is 5-oxoprolinase subunit A.